Reading from the N-terminus, the 577-residue chain is MSAFCLGLAGRASAPAEPDSACCMELPAGAGDAVRSPATAAALVSFPGGPGELELALEEELALLAAGERSSEPGEHPQAEPESPVEGHGPPLPPPPTQDPELLSVIRQKEKDLVLAARLGKALLERNQDMSRQYEQMHKELTDKLEHLEQEKHELRRRFENREGEWEGRVSELETDVKQLQDELERQQLHLREADREKTRAVQELSEQNQRLLDQLSRASEVERQLSMQVHALKEDFREKNSSTNQHIIRLESLQAEIKMLSDRKRELEHRLSATLEENDLLQGTVEELQDRVLILERQGHDKDLQLHQSQLELQEVRLSYRQLQGKVEELTEERSLQSSAATSTSLLSEIEQSMEAEELEQEREQLRLQLWEAYCQVRYLCSHLRGNDSADSAVSTDSSMDESSETSSAKDVPAGSLRTALNDLKRLIQSIVDGVEPTVTLLSVEMTALKEERDRLRVTSEDKEPKEQLQKAIRDRDEAIAKKNAVELELAKCKMDMMSLNSQLLDAIQQKLNLSQQLEAWQDDMHRVIDRQLMDTHLKEQSRPAAAAFPRGHGVGRGQEPSTADGKRLFSFFRKI.

Residues 63–100 are disordered; sequence LLAAGERSSEPGEHPQAEPESPVEGHGPPLPPPPTQDP. Positions 69–79 are enriched in basic and acidic residues; the sequence is RSSEPGEHPQA. The CC1 box signature appears at 116–120; it reads AARLG. The stretch at 121 to 379 forms a coiled coil; that stretch reads KALLERNQDM…QLWEAYCQVR (259 aa). The interval 389–415 is disordered; it reads DSADSAVSTDSSMDESSETSSAKDVPA. The span at 390–399 shows a compositional bias: low complexity; sequence SADSAVSTDS. Positions 443–528 form a coiled coil; sequence LSVEMTALKE…LEAWQDDMHR (86 aa).

This sequence belongs to the BICDR family. In terms of assembly, part of a tripartite complex with dynein and dynactin, acts an adapter linking the dynein motor complex and dynactin. Interacts with KIF1C. Interacts with RAB6A and RAB6B; interaction is specific to Rab6. In terms of tissue distribution, highly expressed during early embryonic development. Predominantly expressed in kidney, undifferentiated neural tissue and developing eye.

Its subcellular location is the cytoplasm. The protein resides in the cytoskeleton. It is found in the microtubule organizing center. It localises to the centrosome. Acts as an adapter protein linking the dynein motor complex to various cargos and converts dynein from a non-processive to a highly processive motor in the presence of dynactin. Facilitates the interaction between dynein and dynactin and activates dynein processivity (the ability to move along a microtubule for a long distance without falling off the track). Predominantly recruits 2 dyneins, which increases both the force and speed of the microtubule motor. Component of secretory vesicle machinery in developing neurons that acts as a regulator of neurite outgrowth. Regulates the secretory vesicle transport by controlling the accumulation of Rab6-containing secretory vesicles in the pericentrosomal region restricting anterograde secretory transport during the early phase of neuronal differentiation, thereby inhibiting neuritogenesis. The protein is BICD family-like cargo adapter 1 (Bicdl1) of Mus musculus (Mouse).